A 1318-amino-acid polypeptide reads, in one-letter code: Putative tetratricopeptide repeat protein 41 (1318 aa).

6 TPR repeats span residues Thr-399 to Ile-432, Trp-653 to Glu-684, Cys-817 to Ser-850, Leu-858 to Leu-891, Met-991 to Ala-1027, and Ser-1045 to His-1082.

The protein resides in the cytoplasm. The polypeptide is Putative tetratricopeptide repeat protein 41 (Homo sapiens (Human)).